Reading from the N-terminus, the 289-residue chain is Acetylglutamate kinase (289 aa).

Substrate contacts are provided by residues 60-61, arginine 82, and asparagine 182; that span reads GG.

This sequence belongs to the acetylglutamate kinase family. ArgB subfamily.

It is found in the cytoplasm. The enzyme catalyses N-acetyl-L-glutamate + ATP = N-acetyl-L-glutamyl 5-phosphate + ADP. It functions in the pathway amino-acid biosynthesis; L-arginine biosynthesis; N(2)-acetyl-L-ornithine from L-glutamate: step 2/4. In terms of biological role, catalyzes the ATP-dependent phosphorylation of N-acetyl-L-glutamate. This is Acetylglutamate kinase from Methanothrix thermoacetophila (strain DSM 6194 / JCM 14653 / NBRC 101360 / PT) (Methanosaeta thermophila).